The chain runs to 84 residues: MLVLARRTNESIMIGDDIEIVIVDIKGDQVKIGVKAPRDVSVHRAEVYKDIQEENKKAAETKIKPADLGKIGNILKKKDSGKKE.

Belongs to the CsrA/RsmA family. As to quaternary structure, homodimer; the beta-strands of each monomer intercalate to form a hydrophobic core, while the alpha-helices form wings that extend away from the core.

The protein resides in the cytoplasm. A translational regulator that binds mRNA to regulate translation initiation and/or mRNA stability. Usually binds in the 5'-UTR at or near the Shine-Dalgarno sequence preventing ribosome-binding, thus repressing translation. Its main target seems to be the major flagellin gene, while its function is anatagonized by FliW. The sequence is that of Translational regulator CsrA from Leptospira interrogans serogroup Icterohaemorrhagiae serovar Lai (strain 56601).